The primary structure comprises 37 residues: Large ribosomal subunit protein bL36 (37 aa).

The protein belongs to the bacterial ribosomal protein bL36 family.

This chain is Large ribosomal subunit protein bL36, found in Thioalkalivibrio sulfidiphilus (strain HL-EbGR7).